A 260-amino-acid chain; its full sequence is 3'-5' ssDNA/RNA exonuclease TatD (260 aa).

A divalent metal cation is bound by residues Glu92, His128, and His153.

It belongs to the metallo-dependent hydrolases superfamily. TatD-type hydrolase family. TatD subfamily. In terms of assembly, monomer. Requires Mg(2+) as cofactor.

Its subcellular location is the cytoplasm. In terms of biological role, 3'-5' exonuclease that prefers single-stranded DNA and RNA. May play a role in the H(2)O(2)-induced DNA damage repair. The chain is 3'-5' ssDNA/RNA exonuclease TatD from Pantoea sp. (strain At-9b).